We begin with the raw amino-acid sequence, 157 residues long: Large ribosomal subunit protein uL15 (157 aa).

A disordered region spans residues Met-1 to Pro-56. The segment covering Ile-23–Met-35 has biased composition (gly residues).

It belongs to the universal ribosomal protein uL15 family. As to quaternary structure, part of the 50S ribosomal subunit.

Binds to the 23S rRNA. In Synechococcus sp. (strain JA-3-3Ab) (Cyanobacteria bacterium Yellowstone A-Prime), this protein is Large ribosomal subunit protein uL15.